A 283-amino-acid chain; its full sequence is Urease accessory protein UreD (283 aa).

Residues 1–20 (MTQTQPVGTLRLTIDDQGPQ) are disordered.

It belongs to the UreD family. UreD, UreF and UreG form a complex that acts as a GTP-hydrolysis-dependent molecular chaperone, activating the urease apoprotein by helping to assemble the nickel containing metallocenter of UreC. The UreE protein probably delivers the nickel.

It is found in the cytoplasm. In terms of biological role, required for maturation of urease via the functional incorporation of the urease nickel metallocenter. In Corynebacterium glutamicum (strain R), this protein is Urease accessory protein UreD.